We begin with the raw amino-acid sequence, 215 residues long: MMQEIKAFNEKRAEIYWWLSSLFAKELTQEELDKYQSMEIRAFLTGLAENDALRPSVNAFVDALNRLVDRQDAQLELAADFCDLFLKTAKHGALPYASIYLTKDGLLNGEPAQKMDAWLKKHGVQVNQQLNEPADHLAIMLDFLGNLIIRSNEFEQDRHMEEAFIEQNAFIQEMLLSWLPSFSQRAAEYDEFGFYNSAIKLLVAFCMLDSDYLVG.

The protein belongs to the TorD/DmsD family. TorD subfamily.

The protein resides in the cytoplasm. Functionally, involved in the biogenesis of TorA. Acts on TorA before the insertion of the molybdenum cofactor and, as a result, probably favors a conformation of the apoenzyme that is competent for acquiring the cofactor. The polypeptide is Chaperone protein TorD (Vibrio vulnificus (strain CMCP6)).